The primary structure comprises 73 residues: uncharacterized protein (73 aa).

In terms of domain architecture, HTH deoR-type spans 8–63 (MLTRIKSVYMFIQEKGLVTTQELVDEFGITPRTIQRDLNVLAYNDLVHSPSRGKWE). Positions 25–44 (VTTQELVDEFGITPRTIQRD) form a DNA-binding region, H-T-H motif.

This is an uncharacterized protein from Bacillus subtilis (strain 168).